We begin with the raw amino-acid sequence, 646 residues long: Protein SENSITIVE TO UV 2 (646 aa).

The segment at 42–70 (PAPPPSTKISSSLSHPMQLQSSAGQQRKQ) is disordered. Polar residues predominate over residues 48-70 (TKISSSLSHPMQLQSSAGQQRKQ). The Nuclear localization signal motif lies at 119–126 (NRRCDSEK). Residues 123-157 (DSEKDLEIDRLKKELERVSKQLLDVEQECSQLKKG) adopt a coiled-coil conformation. The Phosphatase tensin-type domain occupies 376–646 (KRTEQDVKQE…VFAFLGDNTI (271 aa)).

Belongs to the serpin family. In terms of assembly, forms multimers through the coiled-coil domain. Post-translationally, probably phosphorylated by ATR. In terms of tissue distribution, accumulates throughout the root tip.

The protein localises to the nucleus. It is found in the cytoplasm. Required for tolerance to DNA-damaging and cross-linking agents such as UVB irradiation, gamma-radiation, aphidicolin, ionizing radiation and hydroxyurea (HU), cisplatin (CDDP) and mitomycin C (MMC). Involved in cell-cycle G2/M arrest in response to DNA damage. Required for aluminum-dependent gene regulation and root growth inhibition in an ATR-dependent manner by halting cell cycle progression and triggering loss of the quiescent center (QC). The polypeptide is Protein SENSITIVE TO UV 2 (Arabidopsis thaliana (Mouse-ear cress)).